Here is a 455-residue protein sequence, read N- to C-terminus: Argininosuccinate lyase (455 aa).

Belongs to the lyase 1 family. Argininosuccinate lyase subfamily.

It localises to the cytoplasm. It catalyses the reaction 2-(N(omega)-L-arginino)succinate = fumarate + L-arginine. It participates in amino-acid biosynthesis; L-arginine biosynthesis; L-arginine from L-ornithine and carbamoyl phosphate: step 3/3. This chain is Argininosuccinate lyase, found in Caulobacter sp. (strain K31).